Here is a 263-residue protein sequence, read N- to C-terminus: Phosphatidylglycerol--prolipoprotein diacylglyceryl transferase (263 aa).

4 consecutive transmembrane segments (helical) span residues 10-30, 56-76, 91-111, and 117-137; these read VAIT…LFGF, MVTY…ILFY, IWNG…AMWL, and GLGF…GLFF. Residue Arg139 participates in a 1,2-diacyl-sn-glycero-3-phospho-(1'-sn-glycerol) binding. 3 helical membrane-spanning segments follow: residues 171–191, 199–219, and 231–251; these read PSQL…LWVF, GHVS…VEFV, and FGWL…GLWL.

The protein belongs to the Lgt family.

It localises to the cell inner membrane. The catalysed reaction is L-cysteinyl-[prolipoprotein] + a 1,2-diacyl-sn-glycero-3-phospho-(1'-sn-glycerol) = an S-1,2-diacyl-sn-glyceryl-L-cysteinyl-[prolipoprotein] + sn-glycerol 1-phosphate + H(+). It participates in protein modification; lipoprotein biosynthesis (diacylglyceryl transfer). Catalyzes the transfer of the diacylglyceryl group from phosphatidylglycerol to the sulfhydryl group of the N-terminal cysteine of a prolipoprotein, the first step in the formation of mature lipoproteins. In Nitratidesulfovibrio vulgaris (strain DP4) (Desulfovibrio vulgaris), this protein is Phosphatidylglycerol--prolipoprotein diacylglyceryl transferase.